Reading from the N-terminus, the 143-residue chain is Ribonuclease H (143 aa).

An RNase H type-1 domain is found at 1 to 140; sequence MKVEIYTDGA…VDALANLGIE (140 aa). Positions 8, 46, 68, and 132 each coordinate Mg(2+).

This sequence belongs to the RNase H family. Monomer. Mg(2+) serves as cofactor.

The protein resides in the cytoplasm. It carries out the reaction Endonucleolytic cleavage to 5'-phosphomonoester.. Its function is as follows. Endonuclease that specifically degrades the RNA of RNA-DNA hybrids. This chain is Ribonuclease H, found in Legionella pneumophila (strain Lens).